A 463-amino-acid polypeptide reads, in one-letter code: MASMAAVLSKTPFLSQPLTKSSPNSDLPFAAVSFPSKSLRRRVGSIRAGLIAPDGGKLVELIVEEPKRREKKHEAADLPRVELTAIDLQWMHVLSEGWASPLGGFMRESEFLQTLHFNSLRLDDGSVVNMSVPIVLAIDDEQKARIGESTRVALFNSDGNPVAILSDIEIYKHPKEERIARTWGTTAPGLPYVDEAITNAGNWLIGGDLEVLEPVKYNDGLDRFRLSPAELRKELEKRNADAVFAFQLRNPVHNGHALLMTDTRRRLLEMGYKNPILLLHPLGGFTKADDVPLDWRMKQHEKVLEDGVLDPETTVVSIFPSPMHYAGPTEVQWHAKARINAGANFYIVGRDPAGMGHPVEKRDLYDADHGKKVLSMAPGLERLNILPFRVAAYDKTQGKMAFFDPSRPQDFLFISGTKMRTLAKNNENPPDGFMCPGGWKVLVDYYESLTPAGNGRLPEVVPV.

A chloroplast-targeting transit peptide spans 1–48 (MASMAAVLSKTPFLSQPLTKSSPNSDLPFAAVSFPSKSLRRRVGSIRA).

This sequence belongs to the sulfate adenylyltransferase family. In terms of assembly, homotetramer.

It is found in the plastid. It localises to the chloroplast stroma. It carries out the reaction sulfate + ATP + H(+) = adenosine 5'-phosphosulfate + diphosphate. The protein operates within sulfur metabolism; hydrogen sulfide biosynthesis; sulfite from sulfate: step 1/3. In terms of biological role, mediates selenate (Se) reduction, and promotes Se and sulfur (S) uptake and assimilation. This chain is ATP sulfurylase 1, chloroplastic (APS1), found in Arabidopsis thaliana (Mouse-ear cress).